A 184-amino-acid polypeptide reads, in one-letter code: Guanylate kinase (184 aa).

Residues 5–183 (KKLIILTGPS…TAKRIIKLIQ (179 aa)) form the Guanylate kinase-like domain. 12 to 19 (GPSGVGKG) is a binding site for ATP.

It belongs to the guanylate kinase family.

It localises to the cytoplasm. It catalyses the reaction GMP + ATP = GDP + ADP. Essential for recycling GMP and indirectly, cGMP. This is Guanylate kinase from Prochlorococcus marinus (strain MIT 9312).